A 784-amino-acid chain; its full sequence is 5-methyltetrahydropteroyltriglutamate--homocysteine methyltransferase (784 aa).

5-methyltetrahydropteroyltri-L-glutamate is bound by residues 16–19 and Lys-112; that span reads RELK. L-homocysteine is bound by residues 460-462 and Glu-513; that span reads IGS. L-methionine-binding positions include 460 to 462 and Glu-513; that span reads IGS. Trp-590 is a 5-methyltetrahydropteroyltri-L-glutamate binding site. Asp-628 is a binding site for L-homocysteine. Asp-628 provides a ligand contact to L-methionine. Glu-634 lines the 5-methyltetrahydropteroyltri-L-glutamate pocket. The Zn(2+) site is built by His-670, Cys-672, and Glu-694. The active-site Proton donor is the His-723. Cys-755 provides a ligand contact to Zn(2+).

This sequence belongs to the vitamin-B12 independent methionine synthase family. Requires Zn(2+) as cofactor.

It catalyses the reaction 5-methyltetrahydropteroyltri-L-glutamate + L-homocysteine = tetrahydropteroyltri-L-glutamate + L-methionine. The protein operates within amino-acid biosynthesis; L-methionine biosynthesis via de novo pathway; L-methionine from L-homocysteine (MetE route): step 1/1. Catalyzes the transfer of a methyl group from 5-methyltetrahydrofolate to homocysteine resulting in methionine formation. The chain is 5-methyltetrahydropteroyltriglutamate--homocysteine methyltransferase from Acidithiobacillus ferrooxidans (strain ATCC 23270 / DSM 14882 / CIP 104768 / NCIMB 8455) (Ferrobacillus ferrooxidans (strain ATCC 23270)).